A 333-amino-acid chain; its full sequence is Trimethylamine N-oxide-binding protein (333 aa).

An N-terminal signal peptide occupies residues 1-42; sequence MRLFREIAANDPGPTGRMKNMKTFTTALATGVLALCPLAALA. Trimethylamine N-oxide-binding residues include W55, W102, E131, W177, and W222. Residues P249, V251, N254, A257, and D260 each contribute to the Ca(2+) site.

The complex is probably composed of two ATP-binding proteins (TmoW), two transmembrane proteins (TmoV) and a solute-binding protein (TmoX). Monomer in solution, but forms homodimers in crystals.

It is found in the periplasm. With respect to regulation, binds a Ca(2+) ion, which has little effect on either the binding affinity or the secondary structure, but plays an important role in maintaining the stability of TmoX. It may modulate the protein stability in response to biological needs and environmental changes. Thermostability is dramatically decreased when Ca(2+) is removed by EDTA. Part of the ABC transporter complex TmoXWV involved in trimethylamine N-oxide (TMAO) import. Is specific for TMAO and essential for TMAO metabolism. Binds TMAO with high affinity. In vitro, also presents a high binding affinity for choline, however this transporter seems specific for TMAO and the choline-binding affinity presented by recombinant TmoX may not make physiological sense. The protein is Trimethylamine N-oxide-binding protein of Ruegeria pomeroyi (strain ATCC 700808 / DSM 15171 / DSS-3) (Silicibacter pomeroyi).